The chain runs to 310 residues: Deoxypodophyllotoxin synthase (310 aa).

In terms of domain architecture, Fe2OG dioxygenase spans 159–258 (STNYLLHFMR…RLSTSSFSFP (100 aa)). Residues His-184, Asp-186, and His-239 each contribute to the Fe cation site. Arg-249 contacts 2-oxoglutarate.

The protein belongs to the iron/ascorbate-dependent oxidoreductase family. Requires Fe(2+) as cofactor. Mostly expressed in leaves and stems.

It catalyses the reaction (-)-yatein + 2-oxoglutarate + O2 = (-)-deoxypodophyllotoxin + succinate + CO2 + H2O. It functions in the pathway aromatic compound metabolism; phenylpropanoid biosynthesis. In terms of biological role, 2-oxoglutarate-dependent dioxygenase involved in the biosynthesis of etoposide, a chemotherapeutic compound of the topoisomerase inhibitor family. Catalyzes the conversion of yatein to deoxypodophyllotoxin. Can also use, to some extent, demethylyatein as substrate. This is Deoxypodophyllotoxin synthase from Sinopodophyllum hexandrum (Himalayan may apple).